Consider the following 1167-residue polypeptide: RNA-directed RNA polymerase (1167 aa).

The region spanning 553–735 (LTYGILAEAT…KALASYTGLE (183 aa)) is the RdRp catalytic domain.

The protein belongs to the reoviridae RNA-directed RNA polymerase family. As to quaternary structure, interacts with VP3 (Potential). Interacts with VP2 (Potential). Interacts with NSP5; this interaction is probably necessary for the formation of functional virus factories.

It is found in the virion. It catalyses the reaction RNA(n) + a ribonucleoside 5'-triphosphate = RNA(n+1) + diphosphate. In terms of biological role, RNA-directed RNA polymerase that is involved in both transcription and genome replication. Together with VP3 capping enzyme, forms an enzyme complex positioned near the channels situated at each of the five-fold vertices of the core. Following infection, the outermost layer of the virus is lost, leaving a double-layered particle (DLP) made up of the core and VP6 shell. VP1 then catalyzes the transcription of fully conservative plus-strand genomic RNAs that are extruded through the DLP's channels into the cytoplasm where they function as mRNAs for translation of viral proteins. One copy of each of the viral (+)RNAs is also recruited during core assembly, together with newly synthesized polymerase complexes and VP2. The polymerase of these novo-formed particles catalyzes the synthesis of complementary minus-strands leading to dsDNA formation. To do so, the polymerase specifically recognizes conserved 3' sequence(s) in plus-strand RNA templates. Once dsRNA synthesis is complete, the polymerase switches to the transcriptional mode, thus providing secondary transcription. The sequence is that of RNA-directed RNA polymerase from Rotavirus X (strain RVX/Human/China/NADRV-J19/1997/GXP[X]) (RV ADRV-N).